A 1148-amino-acid polypeptide reads, in one-letter code: Maintenance of telomere capping protein 5 (1148 aa).

5 WD repeats span residues 63–106 (HHIT…SNAI), 112–152 (GHSR…RPFY), 156–195 (SWRS…TPLC), 199–239 (GHVS…TESK), and 299–348 (GHSD…YGKV). An RWD domain is found at 432–543 (EEVSAIGHKF…RFVLGEKVSL (112 aa)). Ser759 is modified (phosphoserine). A disordered region spans residues 963–990 (THNTLNGSSKFTEPAQKQGSRAISSSPF). Residues 964–990 (HNTLNGSSKFTEPAQKQGSRAISSSPF) show a composition bias toward polar residues.

This sequence belongs to the WD repeat WDR59 family. Component of the SEA complex composed of at least IML1/SEA1, RTC1/SEA2, MTC5/SEA3, NPR2, NPR3, SEA4, SEC13 and SEH1.

It localises to the vacuole membrane. In terms of biological role, component of the SEA complex which coats the vacuolar membrane and is involved in intracellular trafficking, autophagy, response to nitrogen starvation, and amino acid biogenesis. May be involved in telomere capping. This is Maintenance of telomere capping protein 5 (MTC5) from Saccharomyces cerevisiae (strain ATCC 204508 / S288c) (Baker's yeast).